We begin with the raw amino-acid sequence, 385 residues long: Telomere-binding protein subunit beta (385 aa).

Disordered stretches follow at residues 231–329 and 343–385; these read AADH…ALTT and WHEK…AAKK. A compositionally biased stretch (basic residues) spans 242-262; the sequence is GGAKGKGKAAAKAAKGKKLSA. A compositionally biased stretch (basic and acidic residues) spans 263–280; that stretch reads KKGDSSAADVRKSVDKIV. Composition is skewed to low complexity over residues 295 to 304, 312 to 326, and 365 to 375; these read KSQAPAAGKS, KAVP…KKSA, and GKASATSGKAS. A compositionally biased stretch (basic residues) spans 376-385; that stretch reads KASKKTAAKK.

Heterodimer of an alpha and a beta subunit.

Its subcellular location is the nucleus. The protein resides in the chromosome. It localises to the telomere. In terms of biological role, may function as protective capping of the single-stranded telomeric overhang. May also participate in telomere length regulation during DNA replication. Binds specifically to the T4G4-containing extension on the 3'strand and protects this region of the telomere from nuclease digestion and chemical modification. The protein is Telomere-binding protein subunit beta (MAC-41A) of Sterkiella nova (Ciliate).